Here is a 603-residue protein sequence, read N- to C-terminus: NADH-ubiquinone oxidoreductase chain 5 (603 aa).

17 consecutive transmembrane segments (helical) span residues 4–24, 38–58, 87–107, 114–134, 140–160, 171–191, 210–230, 241–261, 272–292, 301–320, 325–347, 370–390, 407–429, 457–477, 482–502, 537–557, and 582–602; these read YATM…TTFI, SIVA…LCLD, MMFI…SLWY, INQF…LVTA, LFIG…WWYA, AILY…WFLL, LIPL…LGLH, TPVS…FLLI, LAQT…AVCA, IVAF…IGIG, AFLH…GSII, STSL…TGFY, WALS…MILL, LTIG…PTSV, IPLY…LTAL, IPYL…DLIW, and GLIK…LLLI.

Belongs to the complex I subunit 5 family. As to quaternary structure, core subunit of respiratory chain NADH dehydrogenase (Complex I) which is composed of 45 different subunits.

It is found in the mitochondrion inner membrane. The enzyme catalyses a ubiquinone + NADH + 5 H(+)(in) = a ubiquinol + NAD(+) + 4 H(+)(out). In terms of biological role, core subunit of the mitochondrial membrane respiratory chain NADH dehydrogenase (Complex I) which catalyzes electron transfer from NADH through the respiratory chain, using ubiquinone as an electron acceptor. Essential for the catalytic activity and assembly of complex I. The chain is NADH-ubiquinone oxidoreductase chain 5 (MT-ND5) from Gorilla gorilla gorilla (Western lowland gorilla).